The chain runs to 348 residues: tRNA N6-adenosine threonylcarbamoyltransferase (348 aa).

The Fe cation site is built by His115 and His119. Substrate contacts are provided by residues 138–142, Asp171, Gly184, and Asn276; that span reads LVSGG. Asp304 lines the Fe cation pocket.

Belongs to the KAE1 / TsaD family. Fe(2+) is required as a cofactor.

Its subcellular location is the cytoplasm. It catalyses the reaction L-threonylcarbamoyladenylate + adenosine(37) in tRNA = N(6)-L-threonylcarbamoyladenosine(37) in tRNA + AMP + H(+). Required for the formation of a threonylcarbamoyl group on adenosine at position 37 (t(6)A37) in tRNAs that read codons beginning with adenine. Is involved in the transfer of the threonylcarbamoyl moiety of threonylcarbamoyl-AMP (TC-AMP) to the N6 group of A37, together with TsaE and TsaB. TsaD likely plays a direct catalytic role in this reaction. The sequence is that of tRNA N6-adenosine threonylcarbamoyltransferase from Xylella fastidiosa (strain M23).